The following is a 352-amino-acid chain: C-C chemokine receptor type 5 (352 aa).

The Extracellular portion of the chain corresponds to 1-30 (MDYQVSSPTYDIDYDTSEPCQKINVKQIAA). Tyrosine 3 carries the sulfotyrosine modification. O-linked (GalNAc...) serine glycosylation is found at serine 6 and serine 7. Tyrosine 10 and tyrosine 14 each carry sulfotyrosine. 2 disulfide bridges follow: cysteine 20–cysteine 269 and cysteine 101–cysteine 178. A helical membrane pass occupies residues 31 to 58 (RLLPPLYSLVFIFGFVGNMLVILVLINC). The Cytoplasmic segment spans residues 59–68 (KRLKSMTDIY). A helical transmembrane segment spans residues 69–89 (LLNLAISDLFFLLTVPFWAHY). Over 90–102 (AAAQWDFGNTMCQ) the chain is Extracellular. A helical transmembrane segment spans residues 103-124 (LLTGLYFIGFFSGIFFIILLTI). The Cytoplasmic segment spans residues 125–141 (DRYLAIVHAVFALKART). A helical membrane pass occupies residues 142–166 (VTFGVVTSVITWVVAVFASLPGIIF). Topologically, residues 167–198 (TRSQKEGLHYTCSSHFPYSQYQFWKNFQTLKI) are extracellular. A helical transmembrane segment spans residues 199 to 218 (VILGLVLPLLVMVICYSGIL). The Cytoplasmic portion of the chain corresponds to 219-235 (KTLLRCRNEKKRHRAVR). A helical membrane pass occupies residues 236–260 (LIFTIMIVYFLFWAPYNIVLLLNTF). Residues 261–277 (QEFFGLNNCSSSNRLDQ) lie on the Extracellular side of the membrane. Residues 278-301 (AMQVTETLGMTHCCINPIIYAFVG) traverse the membrane as a helical segment. The Cytoplasmic portion of the chain corresponds to 302–352 (EKFRNYLLVFFQKHIAKHFCKCCSIFQQEAPERASSVYTRSTGEQEISVGL). Residues cysteine 321, cysteine 323, and cysteine 324 are each lipidated (S-palmitoyl cysteine). A phosphoserine; by BARK1 mark is found at serine 336, serine 337, serine 342, and serine 349.

It belongs to the G-protein coupled receptor 1 family. As to quaternary structure, interacts with PRAF2. Efficient ligand binding to CCL3/MIP-1alpha and CCL4/MIP-1beta requires sulfation, O-glycosylation and sialic acid modifications. Glycosylation on Ser-6 is required for efficient binding of CCL4. Interacts with GRK2. Interacts with ARRB1 and ARRB2. Interacts with CNIH4. Interacts with S100A4; this interaction stimulates T-lymphocyte chemotaxis. Post-translationally, sulfated on at least 2 of the N-terminal tyrosines. Sulfation is required for efficient binding of the chemokines, CCL3 and CCL4. In terms of processing, palmitoylation in the C-terminal is important for cell surface expression. Phosphorylation on serine residues in the C-terminal is stimulated by binding CC chemokines especially by APO-RANTES. Post-translationally, O-glycosylated, but not N-glycosylated. Ser-6 appears to be the major site even if Ser-7 may be also O-glycosylated. Also sialylated glycans present which contribute to chemokine binding. Thr-16 and Ser-17 may also be glycosylated and, if so, with small moieties such as a T-antigen.

The protein localises to the cell membrane. In terms of biological role, receptor for a number of inflammatory CC-chemokines including CCL3/MIP-1-alpha, CCL4/MIP-1-beta and RANTES and subsequently transduces a signal by increasing the intracellular calcium ion level. May play a role in the control of granulocytic lineage proliferation or differentiation. Participates in T-lymphocyte migration to the infection site by acting as a chemotactic receptor. The chain is C-C chemokine receptor type 5 (CCR5) from Nomascus leucogenys (Northern white-cheeked gibbon).